Reading from the N-terminus, the 577-residue chain is 2-hydroxyacyl-CoA lyase (577 aa).

Glu-59 is a thiamine diphosphate binding site. Residues 412-493 (TMDVGRAVLV…VIVFNNNGVY (82 aa)) form a thiamine pyrophosphate binding region. Residues Asp-462 and Asn-489 each coordinate Mg(2+).

This sequence belongs to the TPP enzyme family. In terms of assembly, homotetramer. Mg(2+) serves as cofactor. Thiamine diphosphate is required as a cofactor.

The catalysed reaction is an (R)-2-hydroxy-long-chain-fatty acyl-CoA = a long-chain fatty aldehyde + formyl-CoA. It catalyses the reaction a 2-hydroxy-3-methyl fatty acyl-CoA = a 2-methyl-branched fatty aldehyde + formyl-CoA. In terms of biological role, catalyzes a carbon-carbon cleavage reaction; cleaves a 2-hydroxy-3-methylacyl-CoA into formyl-CoA and a 2-methyl-branched fatty aldehyde. This Oryza sativa subsp. japonica (Rice) protein is 2-hydroxyacyl-CoA lyase.